Here is a 348-residue protein sequence, read N- to C-terminus: D-alanine--D-alanine ligase (348 aa).

Residues 132–334 (KRVLESIGIP…YPDLIEVLVT (203 aa)) form the ATP-grasp domain. 162-217 (LARLTFPIFVKPANMGSSVGISKAQTKVELRKAIQLALTYDSRVLIEQGVVAREIE) provides a ligand contact to ATP. Mg(2+) is bound by residues Asp288, Glu301, and Asn303.

The protein belongs to the D-alanine--D-alanine ligase family. Requires Mg(2+) as cofactor. The cofactor is Mn(2+).

Its subcellular location is the cytoplasm. It catalyses the reaction 2 D-alanine + ATP = D-alanyl-D-alanine + ADP + phosphate + H(+). It participates in cell wall biogenesis; peptidoglycan biosynthesis. Functionally, cell wall formation. This Streptococcus pyogenes serotype M2 (strain MGAS10270) protein is D-alanine--D-alanine ligase.